We begin with the raw amino-acid sequence, 178 residues long: Peptidyl-prolyl cis-trans isomerase H (178 aa).

The PPIase cyclophilin-type domain occupies 14–177 (FFDISIGDVP…LPVKITECGQ (164 aa)).

This sequence belongs to the cyclophilin-type PPIase family. PPIase H subfamily.

It is found in the nucleus. The catalysed reaction is [protein]-peptidylproline (omega=180) = [protein]-peptidylproline (omega=0). Functionally, PPIases accelerate the folding of proteins. It catalyzes the cis-trans isomerization of proline imidic peptide bonds in oligopeptides. In Rhizopus delemar (strain RA 99-880 / ATCC MYA-4621 / FGSC 9543 / NRRL 43880) (Mucormycosis agent), this protein is Peptidyl-prolyl cis-trans isomerase H (cyp7).